Reading from the N-terminus, the 317-residue chain is Melanocyte-stimulating hormone receptor (317 aa).

Residues 1-37 (MPMQGAQRRLLGSLNSTPTATPNLGLAANHTGAPCLE) lie on the Extracellular side of the membrane. An N-linked (GlcNAc...) asparagine glycan is attached at Asn29. A helical membrane pass occupies residues 38 to 63 (VSIPDGLFLSLGLVSLVENVLVVAAI). Residues 64-72 (AKNRNLHSP) are Cytoplasmic-facing. A helical transmembrane segment spans residues 73-93 (MYCFICCLALSDLLVSGSNML). Residues 94-118 (ETAVILLLEAGALATRASVVQQLQN) are Extracellular-facing. The helical transmembrane segment at 119 to 140 (TIDVLTCSSMLCSLCFLGAIAV) threads the bilayer. The Cytoplasmic segment spans residues 141–163 (DRYVSIFYALRYHSIVTLPRARR). Residues 164–183 (AIAAIWVASVLSSTLFIAYC) traverse the membrane as a helical segment. Residues 184-191 (DHAAVLLC) lie on the Extracellular side of the membrane. The chain crosses the membrane as a helical span at residues 192–211 (LVVFFLAMLVLMAVLYVHML). Residues 212–240 (ARACQHAQGITRLHKRQLPAHQGFGLRGA) lie on the Cytoplasmic side of the membrane. A helical transmembrane segment spans residues 241 to 266 (ATLTILLGIFFLCWGPFFLHLMLVVL). The Extracellular portion of the chain corresponds to 267–279 (CPQHLTCSCIFKN). Residues 280 to 300 (FKVFLTLIICNTIIDPLIYAF) form a helical membrane-spanning segment. Topologically, residues 301 to 317 (RSQELCRTLKEVLLCSW) are cytoplasmic. A lipid anchor (S-palmitoyl cysteine) is attached at Cys315.

Belongs to the G-protein coupled receptor 1 family. Interacts with MGRN1, but does not undergo MGRN1-mediated ubiquitination; this interaction competes with GNAS-binding and thus inhibits agonist-induced cAMP production. Interacts with OPN3; the interaction results in a decrease in MC1R-mediated cAMP signaling and ultimately a decrease in melanin production in melanocytes.

The protein resides in the cell membrane. Its function is as follows. Receptor for MSH (alpha, beta and gamma) and ACTH. The activity of this receptor is mediated by G proteins which activate adenylate cyclase. Mediates melanogenesis, the production of eumelanin (black/brown) and phaeomelanin (red/yellow), via regulation of cAMP signaling in melanocytes. This Alouatta palliata (Mantled howler monkey) protein is Melanocyte-stimulating hormone receptor (MC1R).